The following is a 246-amino-acid chain: Hsp70 nucleotide exchange factor fes-1 (246 aa).

Polar residues predominate over residues 23–40 (QSYHSNGAPTPNNNSGPA). The segment at 23 to 63 (QSYHSNGAPTPNNNSGPATGTGAVATSPAPQVTGSGPRPVD) is disordered. ARM repeat units lie at residues 48 to 92 (TSPA…DPSP), 113 to 152 (LDNA…TAVQ), 155 to 196 (QKTQ…SAVR), and 214 to 244 (HEVL…NKAK).

It belongs to the FES1 family.

The protein resides in the cytoplasm. Functionally, functions as a nucleotide exchange factor (NEF) for Hsp70 chaperones which accelerates the release of ADP. Required for fully efficient Hsp70-mediated folding of proteins. This Neurospora crassa (strain ATCC 24698 / 74-OR23-1A / CBS 708.71 / DSM 1257 / FGSC 987) protein is Hsp70 nucleotide exchange factor fes-1 (fes-1).